Consider the following 383-residue polypeptide: Vesicle-associated membrane protein-associated protein scs2 (383 aa).

Residues 1–123 enclose the MSP domain; that stretch reads MSVECSGELF…SIFDRKIRCV (123 aa). Over 1–362 the chain is Cytoplasmic; that stretch reads MSVECSGELF…TGASLTESPG (362 aa). The segment covering 127-146 has biased composition (polar residues); it reads KQPPQSADKQVENTSTSNPP. Disordered regions lie at residues 127–160 and 233–359; these read KQPPQSADKQVENTSTSNPPVSVEGSENLASSVG and ESAS…SLTE. Residues serine 236, serine 237, serine 259, serine 261, and serine 268 each carry the phosphoserine modification. Basic and acidic residues predominate over residues 241–263; that stretch reads DVARSKVQDIIDNEIPKPSESPR. Residues 289–300 are compositionally biased toward basic and acidic residues; that stretch reads FDTKKNDFDSKL. Polar residues predominate over residues 347–359; sequence ADPSSSTGASLTE. The chain crosses the membrane as a helical; Anchor for type IV membrane protein span at residues 363-383; it reads IPPNIVIILCLIFFLIGYLFF.

It belongs to the VAMP-associated protein (VAP) (TC 9.B.17) family. As to quaternary structure, interacts (via MSP domain) with duc1 (via FFAT-motif); the interaction is direct and serves to restrict the localization of duc1 to areas of cell membrane-endoplasmic reticulum contact sites, and away from the cell division site. Interacts with epr1.

It localises to the endoplasmic reticulum membrane. Functionally, vesicle-associated membrane protein-associated protein (VAP) implicated in maintaining the cortical endoplasmic reticulum (ER)-plasma membrane (PM) attachment. ER-PM contacts function to modulate the distribution of contractile ring components to ensure robust ring assembly. ER-PM contacts function also in controlling exocytosis and maintenance of cell polarity regulating cell shape. VAPs play an important role in regulating eisosome assembly. VAPs also contribute to ER-phagy by tethering atg8 to the ER membrane, but also by maintaining the ER-plasma membrane contact. Restricts the localization of duc1 away from the site of cell division. This chain is Vesicle-associated membrane protein-associated protein scs2 (scs2), found in Schizosaccharomyces pombe (strain 972 / ATCC 24843) (Fission yeast).